A 449-amino-acid polypeptide reads, in one-letter code: Tripartite motif-containing protein 64B (449 aa).

An RING-type zinc finger spans residues 15-56; it reads CCICVNYFIDPVTIDCGHSFCRPCLCLCSEEGRAPMRCPSCR. Residues 87-128 form a B box-type zinc finger; sequence SSDNICVLHEETKELFCEADKRLLCGPCSESPEHMAHSHSPI. Positions 92, 95, 114, and 120 each coordinate Zn(2+). A coiled-coil region spans residues 189–225; it reads LDEEEQRHLQALEREAEELFQQLQDSQVRMTQHLERM. Positions 268-449 constitute a B30.2/SPRY domain; it reads ELTSWCITGV…LRPFFCFGCT (182 aa).

It belongs to the TRIM/RBCC family.

The sequence is that of Tripartite motif-containing protein 64B (TRIM64B) from Homo sapiens (Human).